A 98-amino-acid chain; its full sequence is Small ribosomal subunit protein bS20 (98 aa).

The span at 1–15 shows a compositional bias: basic residues; sequence MAPKKTTKKGGPKKR. Residues 1-21 are disordered; that stretch reads MAPKKTTKKGGPKKRPSAEKR.

The protein belongs to the bacterial ribosomal protein bS20 family.

Functionally, binds directly to 16S ribosomal RNA. In Chlamydia abortus (strain DSM 27085 / S26/3) (Chlamydophila abortus), this protein is Small ribosomal subunit protein bS20.